The chain runs to 152 residues: Early glycoprotein GP48 (152 aa).

An N-terminal signal peptide occupies residues 1-25 (MVMMLRTWRLLPMVLLAAYCYCVFG). 9 N-linked (GlcNAc...) asparagine; by host glycosylation sites follow: N48, N53, N61, N69, N108, N112, N122, N139, and N148.

The protein belongs to the RL11 family. Post-translationally, N-glycosylated and possibly O-glycosylated.

It localises to the virion membrane. This is Early glycoprotein GP48 (UL4) from Homo sapiens (Human).